Consider the following 251-residue polypeptide: Triosephosphate isomerase (251 aa).

9 to 11 (NWK) provides a ligand contact to substrate. His-95 (electrophile) is an active-site residue. Residue Glu-167 is the Proton acceptor of the active site. Substrate contacts are provided by residues Gly-173, Ser-213, and 234 to 235 (GG). A Phosphoserine modification is found at Ser-213.

It belongs to the triosephosphate isomerase family. In terms of assembly, homodimer.

It is found in the cytoplasm. The enzyme catalyses D-glyceraldehyde 3-phosphate = dihydroxyacetone phosphate. Its pathway is carbohydrate biosynthesis; gluconeogenesis. The protein operates within carbohydrate degradation; glycolysis; D-glyceraldehyde 3-phosphate from glycerone phosphate: step 1/1. Functionally, involved in the gluconeogenesis. Catalyzes stereospecifically the conversion of dihydroxyacetone phosphate (DHAP) to D-glyceraldehyde-3-phosphate (G3P). This chain is Triosephosphate isomerase, found in Halalkalibacterium halodurans (strain ATCC BAA-125 / DSM 18197 / FERM 7344 / JCM 9153 / C-125) (Bacillus halodurans).